The chain runs to 1039 residues: Integrin alpha-IIb (1039 aa).

An N-terminal signal peptide occupies residues 1-31 (MARALCPLQALWLLEWVLLLLGPCAAPPAWA). At 32-993 (LNLDPVQLTF…TQLLRALEER (962 aa)) the chain is on the extracellular side. FG-GAP repeat units lie at residues 35 to 96 (DPVQ…GGQC), 110 to 173 (VGSQ…RRAE), 187 to 238 (VEND…FSSY), 251 to 305 (SLSF…DSYY), 306 to 371 (QRLH…PHAL), 373 to 432 (APSL…GLRS), and 435 to 496 (SQVL…VQDS). Asn-46 is a glycosylation site (N-linked (GlcNAc...) asparagine). 3 disulfide bridges follow: Cys-87-Cys-96, Cys-138-Cys-161, and Cys-177-Cys-198. Residues Glu-274, Asp-276, and Asp-278 each contribute to the Ca(2+) site. A glycan (N-linked (GlcNAc...) asparagine) is linked at Asn-280. Positions 281, 283, 328, 330, 332, 334, 336, 396, 398, 400, 402, 404, 457, 459, 461, 463, and 465 each coordinate Ca(2+). 2 disulfide bridges follow: Cys-504-Cys-515 and Cys-521-Cys-576. An N-linked (GlcNAc...) asparagine glycan is attached at Asn-601. Cystine bridges form between Cys-633–Cys-639, Cys-705–Cys-718, Cys-857–Cys-921, and Cys-911–Cys-916. A glycan (N-linked (GlcNAc...) asparagine) is linked at Asn-711. Residue Ile-874 is glycosylated (O-linked (GalNAc...) serine; in variant S-874). The O-linked (GalNAc...) serine glycan is linked to Ser-878. A Pyrrolidone carboxylic acid; in light chain form 1 modification is found at Gln-891. Asn-962 is a glycosylation site (N-linked (GlcNAc...) asparagine). A helical transmembrane segment spans residues 994-1019 (AIPIWWVLVGVLGGLLLLTILVLAMW). The Cytoplasmic segment spans residues 1020–1039 (KVGFFKRNRPPLEEDDEEGE). A GFFKR motif motif is present at residues 1022-1026 (GFFKR).

Belongs to the integrin alpha chain family. In terms of assembly, heterodimer of an alpha and a beta subunit. The alpha subunit is composed of a heavy and a light chain linked by a disulfide bond. Alpha-IIb associates with beta-3. Directly interacts with RNF181. Interacts (via C-terminus cytoplasmic tail region) with CIB1; the interaction is direct and calcium-dependent. Interacts (via C-terminus cytoplasmic tail region) with CIB2, CIB3 and CIB4; the interactions are stabilized/increased in a calcium and magnesium-dependent manner. ITGA2B:ITGB3 interacts with PPIA/CYPA; the interaction is ROS and PPIase activity-dependent and is increased in the presence of thrombin. ITGA2B:ITGB3 interacts with SELP (via C-type lectin domain); the interaction mediates cell-cell interaction and adhesion. In terms of processing, cleaved by ELANE; the cleavage promotes activation of platelet fibrinogen receptor integrin alpha-IIb/beta-3. Isoform 1 and isoform 2 are expressed in platelets and megakaryocytes, but not in reticulocytes. Not detected in Jurkat, nor in U937 cell lines. Isoform 3 is expressed in prostate adenocarcinoma, as well as in several erythroleukemia, prostate adenocarcinoma and melanoma cell lines, including PC-3, DU-145, HEL, WM983A, WM983B and WM35. Not detected in platelets, nor in normal prostate (at protein level).

Its subcellular location is the membrane. Integrin alpha-IIb/beta-3 is a receptor for fibronectin, fibrinogen, plasminogen, prothrombin, thrombospondin and vitronectin. It recognizes the sequence R-G-D in a wide array of ligands. It recognizes the sequence H-H-L-G-G-G-A-K-Q-A-G-D-V in fibrinogen gamma chain. Following activation integrin alpha-IIb/beta-3 brings about platelet/platelet interaction through binding of soluble fibrinogen. This step leads to rapid platelet aggregation which physically plugs ruptured endothelial cell surface. The chain is Integrin alpha-IIb (ITGA2B) from Homo sapiens (Human).